Here is a 149-residue protein sequence, read N- to C-terminus: Calmodulin-1 (149 aa).

N-acetylalanine is present on Ala-2. EF-hand domains lie at 8 to 43 (EQIAEFKEAFSLFDKDGDGTITTKELGTVMRSLGQN), 44 to 79 (PTEAELQDMINEVDADGNGTIDFPEFLTMMARKMKD), 81 to 116 (DSEEEIREAFRVFDKDGNGFISAAELRHVMTNLGEK), and 117 to 149 (LTDEEVDEMIREADIDGDGQVNYEEFVTMMTSK). Asp-21, Asp-23, Asp-25, Thr-27, Glu-32, Asp-57, Asp-59, Asn-61, Thr-63, Glu-68, Asp-94, Asp-96, Asn-98, and Glu-105 together coordinate Ca(2+). An N6,N6,N6-trimethyllysine modification is found at Lys-116. Ca(2+) is bound by residues Asp-130, Asp-132, Asp-134, Gln-136, and Glu-141.

This sequence belongs to the calmodulin family.

Its function is as follows. Calmodulin mediates the control of a large number of enzymes, ion channels and other proteins by Ca(2+). Among the enzymes to be stimulated by the calmodulin-Ca(2+) complex are a number of protein kinases and phosphatases. The sequence is that of Calmodulin-1 from Branchiostoma floridae (Florida lancelet).